The primary structure comprises 220 residues: Competence protein ComFC (220 aa).

The protein belongs to the ComF/GntX family. Monomer and dimer in solution. Interacts with ComFA and DprA; ComFA-ComFC form rings about 150 Angstroms in diameter with apparent 6-fold symmetry.

In terms of biological role, involved in transformation (genetic competence for DNA uptake). The protein is Competence protein ComFC of Streptococcus pneumoniae (strain ATCC BAA-255 / R6).